The following is a 684-amino-acid chain: UvrABC system protein B (684 aa).

The 389-residue stretch at 32 to 420 (DGVLRGDRWQ…GGVVVEQLIR (389 aa)) folds into the Helicase ATP-binding domain. ATP is bound at residue 45 to 52 (GVTGSGKT). Residues 98 to 121 (YYDFYQPEAYIPSLDKYIAKDLKI) carry the Beta-hairpin motif. Residues 437–603 (QIDHLLARIR…SIIKSVDQVL (167 aa)) enclose the Helicase C-terminal domain. One can recognise a UVR domain in the interval 643–678 (MLMVAEMNAEMQKAAEQTDYEKAAYLRDEILMLQER).

It belongs to the UvrB family. As to quaternary structure, forms a heterotetramer with UvrA during the search for lesions. Interacts with UvrC in an incision complex.

Its subcellular location is the cytoplasm. In terms of biological role, the UvrABC repair system catalyzes the recognition and processing of DNA lesions. A damage recognition complex composed of 2 UvrA and 2 UvrB subunits scans DNA for abnormalities. Upon binding of the UvrA(2)B(2) complex to a putative damaged site, the DNA wraps around one UvrB monomer. DNA wrap is dependent on ATP binding by UvrB and probably causes local melting of the DNA helix, facilitating insertion of UvrB beta-hairpin between the DNA strands. Then UvrB probes one DNA strand for the presence of a lesion. If a lesion is found the UvrA subunits dissociate and the UvrB-DNA preincision complex is formed. This complex is subsequently bound by UvrC and the second UvrB is released. If no lesion is found, the DNA wraps around the other UvrB subunit that will check the other stand for damage. This Chlorobaculum tepidum (strain ATCC 49652 / DSM 12025 / NBRC 103806 / TLS) (Chlorobium tepidum) protein is UvrABC system protein B.